Consider the following 709-residue polypeptide: Elongation factor G (709 aa).

The tr-type G domain occupies 10 to 295; it reads NQVRNIGIMA…AVVDYLPSPE (286 aa). Residues 19-26, 91-95, and 145-148 contribute to the GTP site; these read AHIDAGKT, DTPGH, and NKMD.

The protein belongs to the TRAFAC class translation factor GTPase superfamily. Classic translation factor GTPase family. EF-G/EF-2 subfamily.

The protein localises to the cytoplasm. Functionally, catalyzes the GTP-dependent ribosomal translocation step during translation elongation. During this step, the ribosome changes from the pre-translocational (PRE) to the post-translocational (POST) state as the newly formed A-site-bound peptidyl-tRNA and P-site-bound deacylated tRNA move to the P and E sites, respectively. Catalyzes the coordinated movement of the two tRNA molecules, the mRNA and conformational changes in the ribosome. The chain is Elongation factor G from Bifidobacterium animalis subsp. lactis (strain AD011).